The chain runs to 246 residues: tRNA (guanine-N(1)-)-methyltransferase (246 aa).

Residues G114 and 134-139 (IGDYIL) contribute to the S-adenosyl-L-methionine site. A compositionally biased stretch (basic and acidic residues) spans 219-231 (LRRPDLWERHEGA). The disordered stretch occupies residues 219-246 (LRRPDLWERHEGARAQSPSGARRQKKER).

This sequence belongs to the RNA methyltransferase TrmD family. In terms of assembly, homodimer.

Its subcellular location is the cytoplasm. It carries out the reaction guanosine(37) in tRNA + S-adenosyl-L-methionine = N(1)-methylguanosine(37) in tRNA + S-adenosyl-L-homocysteine + H(+). Functionally, specifically methylates guanosine-37 in various tRNAs. The sequence is that of tRNA (guanine-N(1)-)-methyltransferase from Rhizorhabdus wittichii (strain DSM 6014 / CCUG 31198 / JCM 15750 / NBRC 105917 / EY 4224 / RW1) (Sphingomonas wittichii).